A 481-amino-acid polypeptide reads, in one-letter code: Guanine nucleotide exchange factor C9orf72 (481 aa).

Residues 23 to 194 enclose the uDENN C9ORF72-type domain; that stretch reads SPLLAATFAY…ELLSSMKSHS (172 aa). The cDENN C9ORF72-type domain maps to 200–343; the sequence is DIADTVLNDD…SELTAFWRAT (144 aa). Positions 370–464 constitute a dDENN C9ORF72-type domain; it reads VLHRDTLVKA…IKPGLHSFIF (95 aa). The interval 461–481 is required for the homodimerization of the C9orf72-SMCR8 complex; sequence SFIFGRPFYTSVQERDVLMTF.

As to quaternary structure, component of the C9orf72-SMCR8 complex, at least composed of C9orf72, SMCR8 and WDR41. The complex is formed of two protomers, each individually consisting of one molecule each of C9orf72, SMCR8 and WDR41. The protomers homodimerize via an interaction between C9orf72 (via C-terminus) and SMCR8 (via N-terminus). Within each protomer SMCR8 (via DENN domain) acts as a bridging protein between WDR41 (via C-terminus and N-terminus) and C9orf72 (via C-terminus). The C9orf72-SMCR8 complex associates with the ULK1/ATG1 kinase complex. Interacts with ULK1/ATG1 kinase complex members ULK1, ATG13 and RB1CC1. Interacts with SMCR8; the interaction is direct. Interacts with HNRNPA1, HNRNPA2B1 and UBQLN2. Interacts with small Rab GTPase RAB1A; the interaction mediates recruitment of RAB1A to the ULK1/ATG1 kinase complex. Also interacts with small Rab GTPase RAB7A. Interacts with cofilin. Interacts with GTP-binding proteins ARF1 and ARF6. Interacts with the DLG4/PSD-95. Interacts with CARM1 (via PH domain-like fold). Interacts with RAB39A and RAB39B (in GDP-bound forms); functions as GEF for RAB39A and RAB39B. As to expression, both isoforms are widely expressed, including kidney, lung, liver, heart, testis and several brain regions, such as cerebellum. Also expressed in the frontal cortex and in lymphoblasts (at protein level).

It is found in the cytoplasm. It localises to the nucleus. Its subcellular location is the P-body. The protein resides in the stress granule. The protein localises to the endosome. It is found in the lysosome. It localises to the cytoplasmic vesicle. Its subcellular location is the autophagosome. The protein resides in the autolysosome. The protein localises to the secreted. It is found in the cell projection. It localises to the axon. Its subcellular location is the growth cone. The protein resides in the perikaryon. The protein localises to the dendrite. It is found in the presynapse. It localises to the postsynapse. Its subcellular location is the nucleus membrane. Functionally, acts as a guanine-nucleotide releasing factor (GEF) for Rab GTPases by promoting the conversion of inactive RAB-GDP to the active form RAB-GTP. Acts as a GEF for RAB39A which enables HOPS-mediated autophagosome-lysosome membrane tethering and fusion in mammalian autophagy. Component of the C9orf72-SMCR8 complex where both subunits display GEF activity and that regulates autophagy. As part of the C9orf72-SMCR8-WDR41 (CSW) complex, functions as GEF for RAB8A and RAB39B, thereby promoting autophagosome maturation. As part of the C9orf72-SMCR8 complex, also functions as GTPase activating protein (GAP) for RAB8A and RAB11A in vitro. The C9orf72-SMCR8 complex also acts as a regulator of autophagy initiation by interacting with the ULK1/ATG1 kinase complex and modulating its protein kinase activity. Promotes initiation of autophagy by regulating the RAB1A-dependent trafficking of the ULK1/ATG1 kinase complex to the phagophore which leads to autophagosome formation. Acts as a regulator of mTORC1 signaling by promoting phosphorylation of mTORC1 substrates. Plays a role in endosomal trafficking. May be involved in regulating the maturation of phagosomes to lysosomes. Promotes the lysosomal localization and lysosome-mediated degradation of CARM1 which leads to inhibition of starvation-induced lipid metabolism. Regulates actin dynamics in motor neurons by inhibiting the GTP-binding activity of ARF6, leading to ARF6 inactivation. This reduces the activity of the LIMK1 and LIMK2 kinases which are responsible for phosphorylation and inactivation of cofilin, leading to CFL1/cofilin activation. Positively regulates axon extension and axon growth cone size in spinal motor neurons. Required for SMCR8 protein expression and localization at pre- and post-synaptic compartments in the forebrain, also regulates protein abundance of RAB3A and GRIA1/GLUR1 in post-synaptic compartments in the forebrain and hippocampus. Plays a role within the hematopoietic system in restricting inflammation and the development of autoimmunity. In terms of biological role, regulates stress granule assembly in response to cellular stress. Does not play a role in regulation of stress granule assembly in response to cellular stress. This is Guanine nucleotide exchange factor C9orf72 from Homo sapiens (Human).